We begin with the raw amino-acid sequence, 163 residues long: NADH-quinone oxidoreductase subunit I (163 aa).

4Fe-4S ferredoxin-type domains follow at residues 53–83 and 94–123; these read LRRYPNGEERCIACKLCEAICPAQAITIEAG and VRYDIDMVKCIYCGFCQEACPVEAIVEGPN. Cys63, Cys66, Cys69, Cys73, Cys103, Cys106, Cys109, and Cys113 together coordinate [4Fe-4S] cluster.

The protein belongs to the complex I 23 kDa subunit family. As to quaternary structure, NDH-1 is composed of 14 different subunits. Subunits NuoA, H, J, K, L, M, N constitute the membrane sector of the complex. It depends on [4Fe-4S] cluster as a cofactor.

The protein localises to the cell inner membrane. The enzyme catalyses a quinone + NADH + 5 H(+)(in) = a quinol + NAD(+) + 4 H(+)(out). Functionally, NDH-1 shuttles electrons from NADH, via FMN and iron-sulfur (Fe-S) centers, to quinones in the respiratory chain. The immediate electron acceptor for the enzyme in this species is believed to be ubiquinone. Couples the redox reaction to proton translocation (for every two electrons transferred, four hydrogen ions are translocated across the cytoplasmic membrane), and thus conserves the redox energy in a proton gradient. This chain is NADH-quinone oxidoreductase subunit I, found in Bartonella henselae (strain ATCC 49882 / DSM 28221 / CCUG 30454 / Houston 1) (Rochalimaea henselae).